Here is a 453-residue protein sequence, read N- to C-terminus: Zinc finger and BTB domain-containing protein 44 (453 aa).

K4 participates in a covalent cross-link: Glycyl lysine isopeptide (Lys-Gly) (interchain with G-Cter in SUMO2). In terms of domain architecture, BTB spans 31-98 (CDITIRVQDK…AYTATLSINT (68 aa)). S135 carries the post-translational modification Phosphoserine. The disordered stretch occupies residues 135 to 157 (SQPEKSLDAGQENSSNCNFTSRD). A compositionally biased stretch (polar residues) spans 145–157 (QENSSNCNFTSRD). S159, S161, S165, S191, S194, and S199 each carry phosphoserine. T200 is modified (phosphothreonine). The interval 241–266 (QPEKAKQAENTRTLELPGPSEAGRRV) is disordered. A Glycyl lysine isopeptide (Lys-Gly) (interchain with G-Cter in SUMO2) cross-link involves residue K290. Disordered regions lie at residues 295–324 (SDEE…PGSE) and 336–366 (SSSI…ADDD). Residues 304–318 (SQPVSASQSSLSDQQ) are compositionally biased toward low complexity. Positions 352–361 (TLQSTSSTNA) are enriched in polar residues. C2H2-type zinc fingers lie at residues 399–421 (FQCP…MLIH) and 427–449 (FQCD…RLKH).

Its subcellular location is the nucleus. In Mus musculus (Mouse), this protein is Zinc finger and BTB domain-containing protein 44 (Zbtb44).